The sequence spans 638 residues: Lactose permease (638 aa).

Residues 1 to 470 are permease; the sequence is MHNHKVSGKQ…AQVIEELKSK (470 aa). The next 12 membrane-spanning stretches (helical) occupy residues 27–47, 56–76, 94–114, 121–141, 166–186, 204–224, 261–281, 291–311, 320–340, 343–363, 395–415, and 429–449; these read FYGV…FSGL, IGLI…IDPI, WILI…TGIF, WILF…FYSL, LGAF…VPLV, WFAF…IVCF, LAYL…FYMY, FWVV…SFPV, WLFI…IFGH, VFLM…LVTV, FAGA…GMTG, and TFNM…IVVF. One can recognise a PTS EIIA type-1 domain in the interval 503–610; sequence SSVVDEDGKP…KDTIVIFYTQ (108 aa). His558 is subject to Phosphohistidine; by HPr.

It in the N-terminal section; belongs to the sodium:galactoside symporter (TC 2.A.2) family.

Its subcellular location is the cell membrane. Responsible for transport of beta-galactosides into the cell, with the concomitant uptake of protons (symport system), and also for transport of homologous and heterologous exchange of beta-galactosides. The sequence is that of Lactose permease (lacS) from Lactobacillus helveticus (Lactobacillus suntoryeus).